We begin with the raw amino-acid sequence, 241 residues long: Triosephosphate isomerase (241 aa).

9-11 (NWK) is a substrate binding site. The Electrophile role is filled by histidine 96. Glutamate 165 serves as the catalytic Proton acceptor. Substrate is bound by residues glycine 171, serine 204, and 225–226 (GG).

It belongs to the triosephosphate isomerase family. As to quaternary structure, homodimer.

The protein resides in the cytoplasm. The catalysed reaction is D-glyceraldehyde 3-phosphate = dihydroxyacetone phosphate. It functions in the pathway carbohydrate biosynthesis; gluconeogenesis. It participates in carbohydrate degradation; glycolysis; D-glyceraldehyde 3-phosphate from glycerone phosphate: step 1/1. Its function is as follows. Involved in the gluconeogenesis. Catalyzes stereospecifically the conversion of dihydroxyacetone phosphate (DHAP) to D-glyceraldehyde-3-phosphate (G3P). The sequence is that of Triosephosphate isomerase from Trichodesmium erythraeum (strain IMS101).